We begin with the raw amino-acid sequence, 385 residues long: Tyrosine--tRNA ligase 1, cytoplasmic (385 aa).

The 'HIGH' region motif lies at 77 to 85 (PSGRMHIAQ). L-tyrosine contacts are provided by Tyr-200, Gln-204, Asp-207, and Gln-222. Residues 259–263 (KMSKS) carry the 'KMSKS' region motif. Lys-262 contacts ATP.

This sequence belongs to the class-I aminoacyl-tRNA synthetase family.

Its subcellular location is the cytoplasm. The protein resides in the cytosol. It catalyses the reaction tRNA(Tyr) + L-tyrosine + ATP = L-tyrosyl-tRNA(Tyr) + AMP + diphosphate + H(+). Its function is as follows. Catalyzes the attachment of tyrosine to tRNA(Tyr) in a two-step reaction: tyrosine is first activated by ATP to form Tyr-AMP and then transferred to the acceptor end of tRNA(Tyr). The protein is Tyrosine--tRNA ligase 1, cytoplasmic of Arabidopsis thaliana (Mouse-ear cress).